A 454-amino-acid polypeptide reads, in one-letter code: tRNA modification GTPase MnmE (454 aa).

3 residues coordinate (6S)-5-formyl-5,6,7,8-tetrahydrofolate: arginine 23, glutamate 80, and lysine 120. In terms of domain architecture, TrmE-type G spans 216-377; that stretch reads GMKVVIAGRP…LRDHLKQSMG (162 aa). Residue asparagine 226 coordinates K(+). GTP is bound by residues 226 to 231, 245 to 251, 270 to 273, 335 to 338, and 358 to 360; these read NAGKSS, TDIAGTT, DTAG, NKAD, and SAR. Serine 230 lines the Mg(2+) pocket. K(+)-binding residues include threonine 245, isoleucine 247, and threonine 250. Threonine 251 is a binding site for Mg(2+). Lysine 454 is a binding site for (6S)-5-formyl-5,6,7,8-tetrahydrofolate.

Belongs to the TRAFAC class TrmE-Era-EngA-EngB-Septin-like GTPase superfamily. TrmE GTPase family. Homodimer. Heterotetramer of two MnmE and two MnmG subunits. It depends on K(+) as a cofactor.

The protein localises to the cytoplasm. In terms of biological role, exhibits a very high intrinsic GTPase hydrolysis rate. Involved in the addition of a carboxymethylaminomethyl (cmnm) group at the wobble position (U34) of certain tRNAs, forming tRNA-cmnm(5)s(2)U34. The polypeptide is tRNA modification GTPase MnmE (Yersinia pseudotuberculosis serotype O:1b (strain IP 31758)).